Consider the following 205-residue polypeptide: MTERRVPFSLLRGPSWDPFRDWYPHSRLFDQAFGLPRLPEEWSQWLGGSSWPGYVRPLPPAAIESPAVAAPAYSRALSRQLSSGVSEIRHTADRWRVSLDVNHFAPDELTVKTKDGVVEITGKHEERQDEHGYISRCFTRKYTLPPGVDPTQVSSSLSPEGTLTVEAPMPKLATQSNEITIPVTFESRAQLGGPEAAKSDETAAK.

Position 12 is an omega-N-methylarginine (arginine 12). At serine 15 the chain carries Phosphoserine; by MAPKAPK2 and MAPKAPK3. 2 positions are modified to phosphoserine: serine 26 and serine 65. The tract at residues 70–205 is interaction with TGFB1I1; that stretch reads APAYSRALSR…AAKSDETAAK (136 aa). The sHSP domain maps to 76–184; the sequence is ALSRQLSSGV…QSNEITIPVT (109 aa). Residues serine 78 and serine 82 each carry the phosphoserine; by MAPKAPK2, MAPKAPK3 and MAPKAPK5 modification. Residues serine 83, serine 86, and serine 98 each carry the phosphoserine modification. Lysine 123 carries the post-translational modification N6-acetyllysine. Threonine 174 is subject to Phosphothreonine. Phosphoserine occurs at positions 176 and 199.

Belongs to the small heat shock protein (HSP20) family. As to quaternary structure, homooligomer. Homodimer; becomes monomeric upon activation. Heterooligomer; with HSPB6. Associates with alpha- and beta-tubulin. Interacts with TGFB1I1. Interacts with CRYAB. Interacts with HSPB8. Interacts with HSPBAP1. Post-translationally, phosphorylated upon exposure to protein kinase C activators and heat shock. Phosphorylation by MAPKAPK2 and MAPKAPK3 in response to stress dissociates HSPB1 from large small heat-shock protein (sHsps) oligomers and impairs its chaperone activity and ability to protect against oxidative stress effectively. Phosphorylation by MAPKAPK5 in response to PKA stimulation induces F-actin rearrangement. As to expression, detected in all tissues tested: skeletal muscle, heart, aorta, large intestine, small intestine, stomach, esophagus, bladder, adrenal gland, thyroid, pancreas, testis, adipose tissue, kidney, liver, spleen, cerebral cortex, blood serum and cerebrospinal fluid. Highest levels are found in the heart and in tissues composed of striated and smooth muscle.

Its subcellular location is the cytoplasm. The protein resides in the nucleus. It localises to the cytoskeleton. The protein localises to the spindle. Functionally, small heat shock protein which functions as a molecular chaperone probably maintaining denatured proteins in a folding-competent state. Plays a role in stress resistance and actin organization. Through its molecular chaperone activity may regulate numerous biological processes including the phosphorylation and the axonal transport of neurofilament proteins. The polypeptide is Heat shock protein beta-1 (HSPB1) (Homo sapiens (Human)).